Here is a 367-residue protein sequence, read N- to C-terminus: Putrescine-binding periplasmic protein SpuD (367 aa).

An N-terminal signal peptide occupies residues 1-24 (MMKRFGKTLLALTLAGSVAGMAQA). 36–37 (SD) contacts putrescine. An intrachain disulfide couples C173 to C236. Residues D244 and D275 each coordinate putrescine.

It belongs to the bacterial solute-binding protein PotD/PotF family.

The protein localises to the periplasm. Its subcellular location is the secreted. Functionally, putrescine-binding protein probably required for putrescine uptake into cells. Binds putrescine with high affinity, spermidine with relatively low affinity. Does not bind cadaverine or spermine. Putrescine binding induces large inter-domain conformational changes. The sequence is that of Putrescine-binding periplasmic protein SpuD (spuD) from Pseudomonas aeruginosa (strain UCBPP-PA14).